The sequence spans 275 residues: Coagulation factor IX (275 aa).

The residue at position 23 (Tyr-23) is a Sulfotyrosine. Asn-25 carries an N-linked (GlcNAc...) asparagine glycan. Phosphothreonine is present on Thr-27. Asn-35 carries an N-linked (GlcNAc...) asparagine glycan. Thr-47 carries an O-linked (GalNAc...) threonine glycan. The region spanning 49 to 275 (IVGGENAKPG…YTRVSWYVNW (227 aa)) is the Peptidase S1 domain. Cys-74 and Cys-90 form a disulfide bridge. His-89 serves as the catalytic Charge relay system. The N-linked (GlcNAc...) asparagine glycan is linked to Asn-96. Positions 103, 105, 108, 110, and 113 each coordinate Ca(2+). N-linked (GlcNAc...) asparagine glycosylation occurs at Asn-128. The active-site Charge relay system is the Asp-137. 2 disulfides stabilise this stretch: Cys-204-Cys-218 and Cys-229-Cys-257. Ser-233 (charge relay system) is an active-site residue.

The protein belongs to the peptidase S1 family. In terms of assembly, heterodimer of a light chain and a heavy chain; disulfide-linked. Interacts (inactive and activated) with F11 (activated) in calcium-dependent manner. Interacts with SERPINC1. Activated by factor XIa, which excises the activation peptide. The propeptide can also be removed by snake venom protease. Activated by coagulation factor VIIa-tissue factor (F7-F3) complex in calcium-dependent manner.

Its subcellular location is the secreted. It catalyses the reaction Selective cleavage of Arg-|-Ile bond in factor X to form factor Xa.. Functionally, factor IX is a vitamin K-dependent plasma protein that participates in the intrinsic pathway of blood coagulation by converting factor X to its active form in the presence of Ca(2+) ions, phospholipids, and factor VIIIa. This chain is Coagulation factor IX (F9), found in Oryctolagus cuniculus (Rabbit).